Here is a 778-residue protein sequence, read N- to C-terminus: MDTISDVMKHCVPINYDDYDPLPADHFSTYPVFCSKATAEAIEASAEFTRKWKRACEVDGLHQDKLSFQACTTHLGHYNQWAYPDCVPERVSLNAVLSDCAFFWDGMSPVTGRSANVMITSPVDVSDSISAEKMNELTQDFGIAMLSELQSGRRIEPKFEINKMAVQVIRDFIAVDPFTGIGHLKEWKGHLDAQKKSTHNNMSWEKYVEHRVNESGGNWGISVGCWTNDIRISDEEKESVKYLTQLACAGGILGNDYYSFPKEFDEHHRSGTLDRIQNGVALLMREYGYTEEEAKEIIKKEVIIREKKWMDGFNAWSRQAGPETGEIRRYLVMTMALMSGSMFWMSHAGRYHRTDLATTAEDRATLIGKSRGALRVLEGYPPPKNLEGIVREPLASAVQDDNGHVQHEDAVADSSVRNGVHDAFKKSNPRNGKQNGTEGSKGTFTNGGYVQPAKLQQHCTSINSMAIYTAPFQEAAGDICDAPYGYIDSLPSKKNRNKLLDLLNDWLQVPPSSLKRIKNIVHMLHNSSLMLDDIEDASALRRGQPATHTFYGISQTINSANYIYVHVVDEVTRLYNPECINIFVDELRNLHRGQSLDLYWRHHARCPSMEEYIVMVDNKTGGLFRLMLRLLTAESSISRPFDTALSRLLTLTGRYYQIRDDYLNLASADYESKKGFCEDFDEGKFSLPLIHLLSHTRYPDRITSALFNRKPGTNLPYEMKRYILAEMEEVQTLAYSQDVLKYLHEELMHALDEAENRLGANDGVRMMLLGMGPKLLLC.

Residues 4-359 are sesterterpenoid synthase; it reads ISDVMKHCVP…RYHRTDLATT (356 aa). Mg(2+) is bound at residue aspartate 105. Aspartate 105 is a substrate binding site. Residues 211-214 form a substrate region; it reads RVNE. Asparagine 255 is a binding site for substrate. 2 substrate regions span residues 259-263 and 350-351; these read SFPKE and RY. Residues 360–774 are geranylfarneyl diphosphate synthase; sequence AEDRATLIGK…RMMLLGMGPK (415 aa). The disordered stretch occupies residues 423–445; sequence AFKKSNPRNGKQNGTEGSKGTFT. Over residues 429 to 445 the composition is skewed to polar residues; that stretch reads PRNGKQNGTEGSKGTFT. The isopentenyl diphosphate site is built by lysine 493, arginine 496, and histidine 525. Positions 532 and 536 each coordinate Mg(2+). Residue arginine 541 coordinates dimethylallyl diphosphate. An isopentenyl diphosphate-binding site is contributed by arginine 542. Dimethylallyl diphosphate-binding residues include lysine 619, threonine 620, glutamine 657, asparagine 664, and lysine 674.

The protein in the N-terminal section; belongs to the terpene synthase family. It in the C-terminal section; belongs to the FPP/GGPP synthase family.

It carries out the reaction 4 isopentenyl diphosphate + dimethylallyl diphosphate = (2E,6E,10E,14E)-geranylfarnesyl diphosphate + 4 diphosphate. The enzyme catalyses (2E,6E,10E,14E)-geranylfarnesyl diphosphate + H2O = preaspterpenacid acid I + diphosphate. It participates in secondary metabolite biosynthesis; terpenoid biosynthesis. Functionally, sesterterpenoid synthase; part of the gene cluster that mediates the biosynthesis of aspterpenacids. Performs both prenyl transferase and terpene cyclase activity, converting isopentenyl diphosphate and dimethylallyl diphosphate into geranylfarnesyl diphosphate (GFPP) and then converting GFPP into preaspterpenacid I. C22-oxidative modification of preaspterpenacid I by the cytochrome P450 monooxygenase sttB then leads to preaspterpenacid II. It has still to be determined how preaspterpenacid II is further modified to produce aspterpenacids. This is Preaspterpenacid I synthase sttA from Aspergillus terreus.